A 124-amino-acid polypeptide reads, in one-letter code: Small ribosomal subunit protein uS12 (124 aa).

Aspartate 89 carries the 3-methylthioaspartic acid modification. The tract at residues 104–124 (TDGVENRKQSRSKYGTKRPKK) is disordered. Positions 112 to 124 (QSRSKYGTKRPKK) are enriched in basic residues.

It belongs to the universal ribosomal protein uS12 family. In terms of assembly, part of the 30S ribosomal subunit. Contacts proteins S8 and S17. May interact with IF1 in the 30S initiation complex.

In terms of biological role, with S4 and S5 plays an important role in translational accuracy. Functionally, interacts with and stabilizes bases of the 16S rRNA that are involved in tRNA selection in the A site and with the mRNA backbone. Located at the interface of the 30S and 50S subunits, it traverses the body of the 30S subunit contacting proteins on the other side and probably holding the rRNA structure together. The combined cluster of proteins S8, S12 and S17 appears to hold together the shoulder and platform of the 30S subunit. The protein is Small ribosomal subunit protein uS12 of Thermosipho melanesiensis (strain DSM 12029 / CIP 104789 / BI429).